The following is a 159-amino-acid chain: NADH-quinone oxidoreductase subunit B (159 aa).

4 residues coordinate [4Fe-4S] cluster: Cys-36, Cys-37, Cys-102, and Cys-132.

Belongs to the complex I 20 kDa subunit family. As to quaternary structure, NDH-1 is composed of 14 different subunits. Subunits NuoB, C, D, E, F, and G constitute the peripheral sector of the complex. [4Fe-4S] cluster is required as a cofactor.

Its subcellular location is the cell inner membrane. It catalyses the reaction a quinone + NADH + 5 H(+)(in) = a quinol + NAD(+) + 4 H(+)(out). NDH-1 shuttles electrons from NADH, via FMN and iron-sulfur (Fe-S) centers, to quinones in the respiratory chain. The immediate electron acceptor for the enzyme in this species is believed to be ubiquinone. Couples the redox reaction to proton translocation (for every two electrons transferred, four hydrogen ions are translocated across the cytoplasmic membrane), and thus conserves the redox energy in a proton gradient. This Acidovorax ebreus (strain TPSY) (Diaphorobacter sp. (strain TPSY)) protein is NADH-quinone oxidoreductase subunit B.